The following is a 250-amino-acid chain: Ribosomal RNA small subunit methyltransferase J (250 aa).

S-adenosyl-L-methionine contacts are provided by residues Arg101–Asp102, Glu117–Arg118, Ser153–Ser154, and Asp171.

Belongs to the methyltransferase superfamily. RsmJ family.

It is found in the cytoplasm. It carries out the reaction guanosine(1516) in 16S rRNA + S-adenosyl-L-methionine = N(2)-methylguanosine(1516) in 16S rRNA + S-adenosyl-L-homocysteine + H(+). Its function is as follows. Specifically methylates the guanosine in position 1516 of 16S rRNA. The protein is Ribosomal RNA small subunit methyltransferase J of Cronobacter sakazakii (strain ATCC BAA-894) (Enterobacter sakazakii).